We begin with the raw amino-acid sequence, 209 residues long: dTTP/UTP pyrophosphatase (209 aa).

The Proton acceptor role is filled by Asp79.

The protein belongs to the Maf family. YhdE subfamily. Requires a divalent metal cation as cofactor.

The protein resides in the cytoplasm. It carries out the reaction dTTP + H2O = dTMP + diphosphate + H(+). The catalysed reaction is UTP + H2O = UMP + diphosphate + H(+). Nucleoside triphosphate pyrophosphatase that hydrolyzes dTTP and UTP. May have a dual role in cell division arrest and in preventing the incorporation of modified nucleotides into cellular nucleic acids. The chain is dTTP/UTP pyrophosphatase from Bradyrhizobium diazoefficiens (strain JCM 10833 / BCRC 13528 / IAM 13628 / NBRC 14792 / USDA 110).